The following is a 425-amino-acid chain: Glutamyl-tRNA reductase (425 aa).

Substrate contacts are provided by residues 49 to 52 (TCNR), S109, 114 to 116 (EGQ), and Q120. C50 functions as the Nucleophile in the catalytic mechanism. 189–194 (GAGETG) serves as a coordination point for NADP(+).

The protein belongs to the glutamyl-tRNA reductase family. Homodimer.

The enzyme catalyses (S)-4-amino-5-oxopentanoate + tRNA(Glu) + NADP(+) = L-glutamyl-tRNA(Glu) + NADPH + H(+). Its pathway is porphyrin-containing compound metabolism; protoporphyrin-IX biosynthesis; 5-aminolevulinate from L-glutamyl-tRNA(Glu): step 1/2. The protein operates within porphyrin-containing compound metabolism; chlorophyll biosynthesis. In terms of biological role, catalyzes the NADPH-dependent reduction of glutamyl-tRNA(Glu) to glutamate 1-semialdehyde (GSA). The sequence is that of Glutamyl-tRNA reductase from Chlorobium phaeobacteroides (strain DSM 266 / SMG 266 / 2430).